We begin with the raw amino-acid sequence, 427 residues long: Histidinol dehydrogenase (427 aa).

Residues Ser232, Gln254, and His257 each contribute to the substrate site. Positions 254 and 257 each coordinate Zn(2+). Residues Glu322 and His323 each act as proton acceptor in the active site. His323, Asp356, Glu410, and His415 together coordinate substrate. Residue Asp356 coordinates Zn(2+). His415 is a Zn(2+) binding site.

The protein belongs to the histidinol dehydrogenase family. The cofactor is Zn(2+).

It carries out the reaction L-histidinol + 2 NAD(+) + H2O = L-histidine + 2 NADH + 3 H(+). Its pathway is amino-acid biosynthesis; L-histidine biosynthesis; L-histidine from 5-phospho-alpha-D-ribose 1-diphosphate: step 9/9. In terms of biological role, catalyzes the sequential NAD-dependent oxidations of L-histidinol to L-histidinaldehyde and then to L-histidine. This is Histidinol dehydrogenase from Listeria monocytogenes serovar 1/2a (strain ATCC BAA-679 / EGD-e).